Here is a 475-residue protein sequence, read N- to C-terminus: Zinc-regulated GTPase metalloprotein activator 1 (475 aa).

Position 50 to 57 (50 to 57) interacts with GTP; the sequence is GFLGSGKT. Residues cysteine 116, cysteine 118, and cysteine 119 each coordinate Zn(2+). The CXCC motif motif lies at 116–119; it reads CICC. GTP is bound by residues 119-123 and 229-232; these read CTMRE and NKCD. Positions 302–420 constitute a CobW C-terminal domain; sequence IKSFIYKARR…LIESELNNCL (119 aa). Positions 440–467 form a coiled coil; sequence IQLDEELEEEELEEEEEEGEYKDEIEMK. The span at 445-460 shows a compositional bias: acidic residues; sequence ELEEEELEEEEEEGEY. The disordered stretch occupies residues 445–475; the sequence is ELEEEELEEEEEEGEYKDEIEMKVDGSKFKK. The span at 461–475 shows a compositional bias: basic and acidic residues; sequence KDEIEMKVDGSKFKK.

It belongs to the SIMIBI class G3E GTPase family. ZNG1 subfamily.

The catalysed reaction is GTP + H2O = GDP + phosphate + H(+). Zinc chaperone that directly transfers zinc cofactor to target metalloproteins, thereby activating them. Zinc is transferred from the CXCC motif in the GTPase domain to the zinc binding site in target proteins in a process requiring GTP hydrolysis. The protein is Zinc-regulated GTPase metalloprotein activator 1 of Dictyostelium discoideum (Social amoeba).